A 549-amino-acid chain; its full sequence is Cytoplasmic trehalase (549 aa).

Residues Arg168, 175–176, Asn212, 221–223, 292–294, and Gly324 each bind substrate; these read WD, RSQ, and RDE. Residues Asp326 and Glu509 each act as proton donor/acceptor in the active site. Glu525 provides a ligand contact to substrate.

The protein belongs to the glycosyl hydrolase 37 family. In terms of assembly, monomer.

The protein resides in the cytoplasm. The enzyme catalyses alpha,alpha-trehalose + H2O = alpha-D-glucose + beta-D-glucose. It functions in the pathway glycan degradation; trehalose degradation; D-glucose from alpha,alpha-trehalose: step 1/1. Hydrolyzes trehalose to glucose. Could be involved, in cells returning to low osmolarity conditions, in the utilization of the accumulated cytoplasmic trehalose, which was synthesized in response to high osmolarity. The chain is Cytoplasmic trehalase from Escherichia coli O157:H7.